The primary structure comprises 329 residues: UDP-glucose 4-epimerase (329 aa).

Residues 11 to 12 (YV), 31 to 36 (DNFSTG), 51 to 52 (DV), 71 to 75 (FAARS), threonine 115, tyrosine 139, lysine 143, and phenylalanine 167 contribute to the NAD(+) site. Substrate is bound by residues threonine 115 and tyrosine 139. The active-site Proton acceptor is tyrosine 139. Substrate-binding positions include asparagine 168, 185–186 (HL), 202–204 (FMF), arginine 217, and 277–280 (RAGD).

Belongs to the NAD(P)-dependent epimerase/dehydratase family. Homodimer. NAD(+) serves as cofactor.

The enzyme catalyses UDP-alpha-D-glucose = UDP-alpha-D-galactose. The protein operates within carbohydrate metabolism; galactose metabolism. In terms of biological role, involved in the metabolism of galactose. Catalyzes the conversion of UDP-galactose (UDP-Gal) to UDP-glucose (UDP-Glc) through a mechanism involving the transient reduction of NAD. This Corynebacterium glutamicum (strain ATCC 13032 / DSM 20300 / JCM 1318 / BCRC 11384 / CCUG 27702 / LMG 3730 / NBRC 12168 / NCIMB 10025 / NRRL B-2784 / 534) protein is UDP-glucose 4-epimerase (galE).